The following is a 967-amino-acid chain: MPELNFKAIEEKWQKRWLEAKIFEPNIKDKPKEKKFYITVAFPYLSGHLHVGHARTYTIPDVIARFKRMQGYNVLFPMAWHITGSPIVGIAERIKNRDPQTIWIYRDVYKVPEDILWTFEDPVNIVKYFMKAAKETFIRAGFSVDWSREFYTTSLFPPFSKFIEWQFWKLKEKGYIVKGTHRVRWDPVVGTPLGDHDLMDGEDVPILEYILIKFELKEGEETVYLPAATLRPETVYGVTNMWLNPEATYVKAKVKKGDKVETWIISKEAAYKLSFQDREIEVVEEFKGEKLIGKFVRNPVTGDEVIILPAEFVDPDNATGVVMSVPAHAPFDHVALEDLKKQTDILLKYDIDPRIVENITYISLIKLEGYGEFPAVEEVQKLGVKSQKDKDKLEQATKTIYRAEYHKGIFKIPPYEGKPVSEVKELIAKDLMEKGIGEIMYEFAEKNVISRFGNRAVIKIIHDQWFIDYGNPEWKEKAREALKRMKILPESRRAQFEAIIEWLDKKACARKVGLGTPLPWDPDWVIESLSDSTIYMAYYTISRHINKLREEGKLDPEKLTPEFFDYIFLEEFDEKKEKELEEKTGISAEIIHEMKEEFEYWYPLDWRCSAKDLIPNHLTFFIFNHVAIFPEKHWPKGIAVNGFGTLEGQKMSKSKGNVLNFIDAIEENGADVVRLYIMSLAEHDSDFDWRRKEVGRLRKQIERFYELISQFAEYEARENVELKDIDKWMLHRLNKAIKGTTDALEEFRTRTAVQWAFYTIMNDLRWYLRRTEGRDDEAKRYVLRTLADIWVRLMAPFTPHICEELWEKLGGEGFVSLAKWPDPVEEWWNETIEAEEEYVKSVMEDIKEIIEVAKIENARRAYIYTAEDWKWKVVEVVAEKRDFKAAMSELMKDQELRKRGKEIAKIVERLIKDRAFEVKRIDEEKVLREAKDFIEKELGIEIIINPSEDKGGKKKQAMPLKPAIFIE.

The 'HIGH' region signature appears at 43 to 53 (PYLSGHLHVGH). The 'KMSKS' region motif lies at 650 to 654 (KMSKS). Lys-653 contacts ATP.

Belongs to the class-I aminoacyl-tRNA synthetase family.

Its subcellular location is the cytoplasm. It catalyses the reaction tRNA(Leu) + L-leucine + ATP = L-leucyl-tRNA(Leu) + AMP + diphosphate. The chain is Leucine--tRNA ligase from Pyrococcus furiosus (strain ATCC 43587 / DSM 3638 / JCM 8422 / Vc1).